The sequence spans 285 residues: Golgi phosphoprotein 3-like (285 aa).

Positions 1–42 (MTTLTHRARRTEISKNSEKKMESEEDSNWEKSPDNEDSGDSK) are disordered. Positions 10-42 (RTEISKNSEKKMESEEDSNWEKSPDNEDSGDSK) are enriched in basic and acidic residues. 2 residues coordinate a 1,2-diacyl-sn-glycero-3-phospho-(1D-myo-inositol 4-phosphate): W67 and R76. The residue at position 112 (S112) is a Phosphoserine. A 1,2-diacyl-sn-glycero-3-phospho-(1D-myo-inositol 4-phosphate) contacts are provided by R157 and R160. The segment at 176 to 187 (EKQNFLLFDMTT) is beta-hairpin required for oligomerization.

This sequence belongs to the GOLPH3/VPS74 family. Homooligomer. Does not interact MYO18; differs from GOLPH3 by its inability to interact with MYO18. May interact with ARF1.

It is found in the golgi apparatus. It localises to the golgi stack membrane. The protein localises to the trans-Golgi network membrane. Functionally, phosphatidylinositol-4-phosphate-binding protein that may antagonize the action of GOLPH3 which is required for the process of vesicle budding at the Golgi and anterograde transport to the plasma membrane. In Homo sapiens (Human), this protein is Golgi phosphoprotein 3-like (GOLPH3L).